The chain runs to 475 residues: Rho GTPase-activating protein 15 (475 aa).

Over residues 1–22 (MQKSTNSDTSVETLNSTRQGTG) the composition is skewed to polar residues. The interval 1 to 23 (MQKSTNSDTSVETLNSTRQGTGA) is disordered. Residues S43, S103, S196, S199, and S243 each carry the phosphoserine modification. One can recognise a PH domain in the interval 79–189 (MVEKEGYLQK…WFHAIKNAID (111 aa)). Residues 281 to 470 (SHLHKVCERE…LMLSEYSKIF (190 aa)) enclose the Rho-GAP domain.

In terms of tissue distribution, expressed in lung, liver and lymphoid cells.

The protein resides in the cytoplasm. The protein localises to the membrane. Its function is as follows. GTPase activator for the Rho-type GTPases by converting them to an inactive GDP-bound state. Has activity toward RAC1. Overexpression results in an increase in actin stress fibers and cell contraction. The sequence is that of Rho GTPase-activating protein 15 (ARHGAP15) from Homo sapiens (Human).